Reading from the N-terminus, the 384-residue chain is 23S rRNA (uracil(747)-C(5))-methyltransferase RlmC (384 aa).

The [4Fe-4S] cluster site is built by Cys-3, Cys-11, Cys-14, and Cys-87. S-adenosyl-L-methionine contacts are provided by Gln-212, Phe-241, Glu-262, and Asn-309. The active-site Nucleophile is the Cys-336.

Belongs to the class I-like SAM-binding methyltransferase superfamily. RNA M5U methyltransferase family. RlmC subfamily.

The enzyme catalyses uridine(747) in 23S rRNA + S-adenosyl-L-methionine = 5-methyluridine(747) in 23S rRNA + S-adenosyl-L-homocysteine + H(+). Its function is as follows. Catalyzes the formation of 5-methyl-uridine at position 747 (m5U747) in 23S rRNA. The sequence is that of 23S rRNA (uracil(747)-C(5))-methyltransferase RlmC from Shewanella amazonensis (strain ATCC BAA-1098 / SB2B).